Here is a 1120-residue protein sequence, read N- to C-terminus: Mechanosensitive channel MscK (1120 aa).

Residues Met1 to Ala33 form the signal peptide. The Periplasmic segment spans residues Arg34–Ala499. 3 coiled-coil regions span residues Thr43–Ala98, Ser126–Glu266, and Asp360–Leu422. Residues Trp500–Ile520 traverse the membrane as a helical segment. Topologically, residues His521 to Ala560 are cytoplasmic. Residues Leu561–Ile581 traverse the membrane as a helical segment. Position 582 (Ser582) is a topological domain, periplasmic. The chain crosses the membrane as a helical span at residues Glu583 to Trp603. Residues Lys604 to Ser634 lie on the Cytoplasmic side of the membrane. A helical membrane pass occupies residues Leu635–Met655. Topologically, residues Asp656 to Asp657 are periplasmic. The helical transmembrane segment at Val658–Met678 threads the bilayer. Residues Cys679–Arg692 lie on the Cytoplasmic side of the membrane. A helical membrane pass occupies residues Leu693–Gly713. The Periplasmic segment spans residues Tyr714 to Thr728. The chain crosses the membrane as a helical span at residues Val729–Ala749. The Cytoplasmic segment spans residues Ala750–Leu796. Residues Leu797–Phe817 traverse the membrane as a helical segment. Over Ser818–Lys839 the chain is Periplasmic. Residues Asn840–Ile860 form a helical membrane-spanning segment. Over Arg861 to Thr886 the chain is Cytoplasmic. Residues Thr887 to Val907 traverse the membrane as a helical segment. Over Ser908–Val921 the chain is Periplasmic. The helical transmembrane segment at Gly922–Phe942 threads the bilayer. At Glu943–Gly1120 the chain is on the cytoplasmic side. Residues Tyr1057 to Glu1081 are a coiled coil.

It belongs to the MscS (TC 1.A.23) family.

The protein resides in the cell inner membrane. Mechanosensitive channel that opens in response to membrane tension and specific ionic conditions. Requires high concentrations of external K(+), NH(4)(+), Rb(+) or Cs(+) to gate. May participate in the regulation of osmotic pressure changes within the cell, although it does not appear to have a major role in osmolarity regulation. Forms an ion channel of 1.0 nanosiemens conductance. The channel can remain active for between 30 seconds and over 3 minutes; it does not desensitize upon extended pressure. Its activity is masked in wild-type cells by the MscS channel. This Escherichia coli (strain K12) protein is Mechanosensitive channel MscK (mscK).